The primary structure comprises 102 residues: NADH-quinone oxidoreductase subunit K (102 aa).

The next 3 membrane-spanning stretches (helical) occupy residues 5–25 (IMHYLIVSALMFTIGIAGIFL), 31–51 (IIILMSIELILLSVNLNFVAF), and 66–86 (FILTVAAAEAAIGLAILVVFF).

The protein belongs to the complex I subunit 4L family. NDH-1 is composed of 14 different subunits. Subunits NuoA, H, J, K, L, M, N constitute the membrane sector of the complex.

Its subcellular location is the cell inner membrane. It carries out the reaction a quinone + NADH + 5 H(+)(in) = a quinol + NAD(+) + 4 H(+)(out). Functionally, NDH-1 shuttles electrons from NADH, via FMN and iron-sulfur (Fe-S) centers, to quinones in the respiratory chain. The immediate electron acceptor for the enzyme in this species is believed to be ubiquinone. Couples the redox reaction to proton translocation (for every two electrons transferred, four hydrogen ions are translocated across the cytoplasmic membrane), and thus conserves the redox energy in a proton gradient. The sequence is that of NADH-quinone oxidoreductase subunit K from Bartonella henselae (strain ATCC 49882 / DSM 28221 / CCUG 30454 / Houston 1) (Rochalimaea henselae).